We begin with the raw amino-acid sequence, 330 residues long: HPr kinase/phosphorylase (330 aa).

Active-site residues include histidine 153 and lysine 174. An ATP-binding site is contributed by 168 to 175 (GKSGLGKS). Serine 175 contacts Mg(2+). Aspartate 192 acts as the Proton acceptor; for phosphorylation activity. Proton donor; for dephosphorylation activity in catalysis. The important for the catalytic mechanism of both phosphorylation and dephosphorylation stretch occupies residues 217–226 (MEIRGLGVVD). Glutamate 218 contributes to the Mg(2+) binding site. The active site involves arginine 259. The interval 280–285 (PIFPGK) is important for the catalytic mechanism of dephosphorylation.

The protein belongs to the HPrK/P family. In terms of assembly, homohexamer. The cofactor is Mg(2+).

It carries out the reaction [HPr protein]-L-serine + ATP = [HPr protein]-O-phospho-L-serine + ADP + H(+). It catalyses the reaction [HPr protein]-O-phospho-L-serine + phosphate + H(+) = [HPr protein]-L-serine + diphosphate. Its function is as follows. Catalyzes the ATP- as well as the pyrophosphate-dependent phosphorylation of a specific serine residue in HPr, a phosphocarrier protein of the phosphoenolpyruvate-dependent sugar phosphotransferase system (PTS). HprK/P also catalyzes the pyrophosphate-producing, inorganic phosphate-dependent dephosphorylation (phosphorolysis) of seryl-phosphorylated HPr (P-Ser-HPr). This is HPr kinase/phosphorylase from Chlorobium limicola (strain DSM 245 / NBRC 103803 / 6330).